The sequence spans 463 residues: GTPase Der (463 aa).

EngA-type G domains are found at residues 3-166 and 177-350; these read PVVA…PESG and IRIA…QSAM. Residues 9–16, 56–60, 118–121, 183–190, 230–234, and 295–298 each bind GTP; these read GRTNVGKS, DTGGI, NKID, GRPNVGKS, DTAGI, and NKWD. Residues 351–435 enclose the KH-like domain; the sequence is LDLSASRLTQ…PLKLVFKSAE (85 aa).

It belongs to the TRAFAC class TrmE-Era-EngA-EngB-Septin-like GTPase superfamily. EngA (Der) GTPase family. As to quaternary structure, associates with the 50S ribosomal subunit.

Its function is as follows. GTPase that plays an essential role in the late steps of ribosome biogenesis. The sequence is that of GTPase Der from Methylococcus capsulatus (strain ATCC 33009 / NCIMB 11132 / Bath).